The chain runs to 312 residues: Malate dehydrogenase (312 aa).

Residues 7–13 (GAAGGIG) and aspartate 34 contribute to the NAD(+) site. Substrate is bound by residues arginine 81 and arginine 87. Residues asparagine 94 and 117–119 (ITN) each bind NAD(+). Substrate contacts are provided by asparagine 119 and arginine 153. The active-site Proton acceptor is histidine 177. Methionine 228 contributes to the NAD(+) binding site.

This sequence belongs to the LDH/MDH superfamily. MDH type 1 family. In terms of assembly, homodimer.

It carries out the reaction (S)-malate + NAD(+) = oxaloacetate + NADH + H(+). Catalyzes the reversible oxidation of malate to oxaloacetate. The chain is Malate dehydrogenase from Mannheimia succiniciproducens (strain KCTC 0769BP / MBEL55E).